The chain runs to 512 residues: Retinaldehyde dehydrogenase 3 (512 aa).

Residues Met-1–Arg-22 are disordered. Ala-2 carries the post-translational modification N-acetylalanine. NAD(+) contacts are provided by residues Lys-204, Glu-207, and Gly-257–Gly-262. The active-site Proton acceptor is Glu-280. Cys-314 functions as the Nucleophile in the catalytic mechanism. Gln-361 and Glu-411 together coordinate NAD(+).

The protein belongs to the aldehyde dehydrogenase family. Homotetramer. Detected in embryonic head (at protein level). Ventral retina.

It localises to the cytoplasm. It carries out the reaction retinal + NAD(+) + H2O = retinoate + NADH + 2 H(+). It catalyses the reaction all-trans-retinal + NAD(+) + H2O = all-trans-retinoate + NADH + 2 H(+). The catalysed reaction is all-trans-13,14-dihydroretinal + NAD(+) + H2O = all-trans-13,14-dihydroretinoate + NADH + 2 H(+). The protein operates within cofactor metabolism; retinol metabolism. Catalyzes the NAD-dependent oxidation of aldehyde substrates, such as all-trans-retinal and all-trans-13,14-dihydroretinal, to their corresponding carboxylic acids, all-trans-retinoate and all-trans-13,14-dihydroretinoate, respectively. High specificity for all-trans-retinal as substrate, can also accept acetaldehyde as substrate in vitro but with lower affinity. Required for the biosynthesis of normal levels of retinoate in the embryonic ocular and nasal regions; a critical lipid in the embryonic development of the eye and the nasal region. The sequence is that of Retinaldehyde dehydrogenase 3 (Aldh1a3) from Mus musculus (Mouse).